The sequence spans 230 residues: MKRLILPFLSVGLLLGTTAHAATPLKTEQDKLSYSMGVMTGKAFRKHDIKIDPQTFSMGLSDAYLGKETQMTEAEMRQTLQQFEKQSLQKMQHKMKQTAQQNAEKSRAFLTANKNKPGVKTLANGLQYKVLQAGQGQSPTLNDEVTVNYEGRLINGTVFDSSYKRGQPATFPLKSVIKGWQEALTRMKPGAIWEIYVPPQLAYGEQGAPGVIGPNEALIFKVNLISVKKK.

Residues 1–21 (MKRLILPFLSVGLLLGTTAHA) form the signal peptide. Residues 142-230 (NDEVTVNYEG…KVNLISVKKK (89 aa)) form the PPIase FKBP-type domain.

The protein belongs to the FKBP-type PPIase family.

It localises to the secreted. It carries out the reaction [protein]-peptidylproline (omega=180) = [protein]-peptidylproline (omega=0). May be an essential virulence factor associated with macrophage infectivity. Exhibits PPIase activity. The polypeptide is Peptidyl-prolyl cis-trans isomerase Mip (mip) (Coxiella burnetii (strain RSA 493 / Nine Mile phase I)).